A 133-amino-acid chain; its full sequence is Small ribosomal subunit protein uS8 (133 aa).

This sequence belongs to the universal ribosomal protein uS8 family. As to quaternary structure, part of the 30S ribosomal subunit.

Its function is as follows. One of the primary rRNA binding proteins, it binds directly to 16S rRNA central domain where it helps coordinate assembly of the platform of the 30S subunit. This chain is Small ribosomal subunit protein uS8, found in Ignicoccus hospitalis (strain KIN4/I / DSM 18386 / JCM 14125).